The primary structure comprises 49 residues: uncharacterized protein (49 aa).

Residues 17–39 traverse the membrane as a helical segment; that stretch reads LLVFDTSLYIPPFMLSFIGYSLS.

It is found in the membrane. This is an uncharacterized protein from Saccharomyces cerevisiae (strain ATCC 204508 / S288c) (Baker's yeast).